We begin with the raw amino-acid sequence, 301 residues long: Very-long-chain aldehyde decarbonylase GL1-10 (301 aa).

A run of 3 helical transmembrane segments spans residues 36–56, 94–114, and 187–207; these read VLFW…PLPV, FFLV…MVGI, and SFVG…WIVL. The region spanning 131 to 265 is the Fatty acid hydroxylase domain; that stretch reads LVYFLVEDYL…FTYCDYLYGT (135 aa).

This sequence belongs to the sterol desaturase family. In terms of assembly, homodimer. Expressed ubiquitously.

Its subcellular location is the endoplasmic reticulum membrane. It carries out the reaction a long-chain fatty aldehyde + 2 NADPH + O2 + H(+) = a long-chain alkane + formate + 2 NADP(+) + H2O. Functionally, aldehyde decarbonylase involved in the conversion of aldehydes to alkanes. Core component of a very-long-chain alkane synthesis complex. The sequence is that of Very-long-chain aldehyde decarbonylase GL1-10 from Oryza sativa subsp. japonica (Rice).